A 173-amino-acid polypeptide reads, in one-letter code: Lipoprotein signal peptidase (173 aa).

Transmembrane regions (helical) follow at residues 9 to 29 (LPFLLTAIVIVVDQVTKILVV), 37 to 57 (VIPVIGDLVNLRFVYNTGAAF), and 70 to 90 (ILLVFLPFLLLIALTGAYLKS). Catalysis depends on residues aspartate 124 and aspartate 146. A helical transmembrane segment spans residues 142–162 (FNAADSFIVCCGIGLGVNLIL).

It belongs to the peptidase A8 family.

It localises to the cell inner membrane. It catalyses the reaction Release of signal peptides from bacterial membrane prolipoproteins. Hydrolyzes -Xaa-Yaa-Zaa-|-(S,diacylglyceryl)Cys-, in which Xaa is hydrophobic (preferably Leu), and Yaa (Ala or Ser) and Zaa (Gly or Ala) have small, neutral side chains.. It participates in protein modification; lipoprotein biosynthesis (signal peptide cleavage). In terms of biological role, this protein specifically catalyzes the removal of signal peptides from prolipoproteins. The sequence is that of Lipoprotein signal peptidase from Treponema denticola (strain ATCC 35405 / DSM 14222 / CIP 103919 / JCM 8153 / KCTC 15104).